The sequence spans 593 residues: MYGNQQNNSNPYQMSYYRMNNGQGQGTNRWPQQLSHQEMLAGHSQQILNNNKPAGNQSKPPIVMASNNVFSIGPYRQRKDSSRISVLQKYEIIGYIAAGTYGKVYKAKARDYQNGMNRDNVIILDSPDSVSADSNLDINSINRSTRQQEANDNLTTMDFRKPSHKRFTPPNNSNSTQIRSNSGSETNVRINSSSITNNSRKPSQIQFYAIKKFKTEREGVEHYTGISQSACREMSLCRELDNNHLTKLVEIFLEKKSIYMVSEFAEHDLLQIIHFHSHPEKRLIPPRMLKSIMWQILDGVSYLHQNWILHRDLKPANIMVTVDGCVKIGDLGLARKFNNMVQTLYTGDKVIVTIWYRAPELILGARHYTPAIDLWAVGCIFAELIGLRPIFKGEEAKMESKKSVLFQANQFQKILEVMGSPDHKIWPNIDSYPEYLQLAKMPKYRDNLTAWYQTAGGKDKTALDILYRLLQYDPIKRIDAIDALDHVYFTNGDPPVCENVFEGLNYKYPPRRIHTNDNDITNVGNDNNQANHSQKQPMHGNNNNKNGNMNGLGVNKRILAAAAAAAAAAAVSGNGNNPTSNTATGGSARKKRK.

The Protein kinase domain maps to 90-489 (YEIIGYIAAG…AIDALDHVYF (400 aa)). 96–104 (IAAGTYGKV) contacts ATP. The interval 161 to 199 (KPSHKRFTPPNNSNSTQIRSNSGSETNVRINSSSITNNS) is disordered. Residues 169 to 185 (PPNNSNSTQIRSNSGSE) show a composition bias toward polar residues. Over residues 186 to 199 (TNVRINSSSITNNS) the composition is skewed to low complexity. K211 lines the ATP pocket. Residue D312 is the Proton acceptor of the active site. Disordered regions lie at residues 517–551 (DNDITNVGNDNNQANHSQKQPMHGNNNNKNGNMNG) and 569–593 (AAVSGNGNNPTSNTATGGSARKKRK). The segment covering 518 to 536 (NDITNVGNDNNQANHSQKQ) has biased composition (polar residues). Over residues 540 to 551 (GNNNNKNGNMNG) the composition is skewed to low complexity. A compositionally biased stretch (polar residues) spans 573–585 (GNGNNPTSNTATG).

It belongs to the protein kinase superfamily. CMGC Ser/Thr protein kinase family. CDC2/CDKX subfamily. As to quaternary structure, component of the SRB8-11 complex, a regulatory module of the Mediator complex. Mg(2+) serves as cofactor.

The protein resides in the nucleus. It catalyses the reaction L-seryl-[protein] + ATP = O-phospho-L-seryl-[protein] + ADP + H(+). It carries out the reaction L-threonyl-[protein] + ATP = O-phospho-L-threonyl-[protein] + ADP + H(+). The enzyme catalyses [DNA-directed RNA polymerase] + ATP = phospho-[DNA-directed RNA polymerase] + ADP + H(+). In terms of biological role, component of the SRB8-11 complex. The SRB8-11 complex is a regulatory module of the Mediator complex which is itself involved in regulation of basal and activated RNA polymerase II-dependent transcription. The SRB8-11 complex may be involved in the transcriptional repression of a subset of genes regulated by Mediator. It may inhibit the association of the Mediator complex with RNA polymerase II to form the holoenzyme complex. The SRB8-11 complex phosphorylates the C-terminal domain (CTD) of the largest subunit of RNA polymerase II. This chain is Serine/threonine-protein kinase SSN3 (SSN3), found in Kluyveromyces lactis (strain ATCC 8585 / CBS 2359 / DSM 70799 / NBRC 1267 / NRRL Y-1140 / WM37) (Yeast).